We begin with the raw amino-acid sequence, 346 residues long: E3 ubiquitin-protein ligase MARCHF9 (346 aa).

2 disordered regions span residues 20–39 (GGGR…GGCG) and 47–92 (STRD…PGAL). Residues 63 to 75 (PRARGLAGDKEPR) are compositionally biased toward basic and acidic residues. The span at 77–90 (GPLPPPAPPLPPPG) shows a compositional bias: pro residues. The RING-CH-type zinc-finger motif lies at 102-162 (DSGLRTPQCR…ELCYFKYQVL (61 aa)). Zn(2+) is bound by residues Cys-110, Cys-113, Cys-126, Cys-128, His-136, Cys-139, Cys-152, and Cys-155. A run of 2 helical transmembrane segments spans residues 185-205 (IAAI…LIWS) and 219-239 (LFQI…GLII). Disordered regions lie at residues 273 to 301 (DAGG…RPPA) and 326 to 346 (PPDA…VTTV). Positions 284 to 296 (PRNSRTGPTSGAT) are enriched in polar residues.

As to quaternary structure, homodimer. In terms of tissue distribution, ubiquitously expressed.

The protein resides in the golgi apparatus membrane. The protein localises to the lysosome membrane. It carries out the reaction S-ubiquitinyl-[E2 ubiquitin-conjugating enzyme]-L-cysteine + [acceptor protein]-L-lysine = [E2 ubiquitin-conjugating enzyme]-L-cysteine + N(6)-ubiquitinyl-[acceptor protein]-L-lysine.. It participates in protein modification; protein ubiquitination. Functionally, E3 ubiquitin-protein ligase that may mediate ubiquitination of MHC-I, CD4 and ICAM1, and promote their subsequent endocytosis and sorting to lysosomes via multivesicular bodies. E3 ubiquitin ligases accept ubiquitin from an E2 ubiquitin-conjugating enzyme in the form of a thioester and then directly transfer the ubiquitin to targeted substrates. This chain is E3 ubiquitin-protein ligase MARCHF9, found in Homo sapiens (Human).